The chain runs to 148 residues: SsrA-binding protein (148 aa).

Over residues 129–142 (ETEKKRDWEREKAR) the composition is skewed to basic and acidic residues. The disordered stretch occupies residues 129–148 (ETEKKRDWEREKARIMRAGT).

This sequence belongs to the SmpB family.

The protein localises to the cytoplasm. In terms of biological role, required for rescue of stalled ribosomes mediated by trans-translation. Binds to transfer-messenger RNA (tmRNA), required for stable association of tmRNA with ribosomes. tmRNA and SmpB together mimic tRNA shape, replacing the anticodon stem-loop with SmpB. tmRNA is encoded by the ssrA gene; the 2 termini fold to resemble tRNA(Ala) and it encodes a 'tag peptide', a short internal open reading frame. During trans-translation Ala-aminoacylated tmRNA acts like a tRNA, entering the A-site of stalled ribosomes, displacing the stalled mRNA. The ribosome then switches to translate the ORF on the tmRNA; the nascent peptide is terminated with the 'tag peptide' encoded by the tmRNA and targeted for degradation. The ribosome is freed to recommence translation, which seems to be the essential function of trans-translation. The chain is SsrA-binding protein from Burkholderia orbicola (strain AU 1054).